The sequence spans 308 residues: Elongation factor Ts (308 aa).

The tract at residues 80-83 (TDFV) is involved in Mg(2+) ion dislocation from EF-Tu.

This sequence belongs to the EF-Ts family.

Its subcellular location is the cytoplasm. In terms of biological role, associates with the EF-Tu.GDP complex and induces the exchange of GDP to GTP. It remains bound to the aminoacyl-tRNA.EF-Tu.GTP complex up to the GTP hydrolysis stage on the ribosome. The sequence is that of Elongation factor Ts from Rhodopseudomonas palustris (strain ATCC BAA-98 / CGA009).